The following is a 468-amino-acid chain: UDP-N-acetylmuramoyl-L-alanine--L-glutamate ligase (468 aa).

ATP is bound at residue 122 to 128 (GTKGKST).

This sequence belongs to the MurCDEF family. MurD2 subfamily.

The protein resides in the cytoplasm. The catalysed reaction is UDP-N-acetyl-alpha-D-muramoyl-L-alanine + L-glutamate + ATP = UDP-N-acetyl-alpha-D-muramoyl-L-alanyl-L-glutamate + ADP + phosphate + H(+). It functions in the pathway cell wall biogenesis; peptidoglycan biosynthesis. Functionally, cell wall formation. Catalyzes the addition of L-glutamate to the nucleotide precursor UDP-N-acetylmuramoyl-L-alanine. Has weak activity with D-glutamate. In Xanthomonas oryzae pv. oryzae (strain MAFF 311018), this protein is UDP-N-acetylmuramoyl-L-alanine--L-glutamate ligase.